Here is a 276-residue protein sequence, read N- to C-terminus: N-acetylmuramoyl-L-alanine amidase AmiD (276 aa).

Positions Met1 to Gly16 are cleaved as a signal peptide. The N-palmitoyl cysteine moiety is linked to residue Cys17. Cys17 is lipidated: S-diacylglycerol cysteine. The N-acetylmuramoyl-L-alanine amidase domain occupies Pro42–Pro179. His50 is a Zn(2+) binding site. Tyr51–Thr52 provides a ligand contact to substrate. The active-site Proton acceptor is Glu119. Zn(2+) is bound by residues His166 and Asp176.

It belongs to the N-acetylmuramoyl-L-alanine amidase 2 family. Requires Zn(2+) as cofactor.

The protein resides in the cell outer membrane. It catalyses the reaction Hydrolyzes the link between N-acetylmuramoyl residues and L-amino acid residues in certain cell-wall glycopeptides.. The chain is N-acetylmuramoyl-L-alanine amidase AmiD (amiD) from Escherichia coli (strain K12).